The chain runs to 806 residues: G-type lectin S-receptor-like serine/threonine-protein kinase At1g61430 (806 aa).

The N-terminal stretch at 1-24 is a signal peptide; the sequence is MGKKRIVFFAYLPFFTIFMSFSFA. A Bulb-type lectin domain is found at 25–144; that stretch reads GITKESPFSI…VSGRTLWQSF (120 aa). Over 25–425 the chain is Extracellular; the sequence is GITKESPFSI…ELDVNKRKMT (401 aa). Asn-53, Asn-94, Asn-117, and Asn-236 each carry an N-linked (GlcNAc...) asparagine glycan. The EGF-like domain maps to 277–313; that stretch reads PANSCDIYGVCGPFGLCVVSIPPKCKCFKGFVPKFAK. Cystine bridges form between Cys-281–Cys-293 and Cys-287–Cys-301. N-linked (GlcNAc...) asparagine glycans are attached at residues Asn-319, Asn-335, and Asn-374. The region spanning 332–414 is the PAN domain; sequence CQGNSSGKDA…GELLSIRLAR (83 aa). Cystine bridges form between Cys-367-Cys-388 and Cys-371-Cys-377. A helical transmembrane segment spans residues 426–446; sequence IVASTVSLTLFVIFGFAAFGF. At 447–806 the chain is on the cytoplasmic side; it reads WRCRVEHNAH…EMTESVIQGR (360 aa). The Protein kinase domain maps to 489–777; the sequence is FSLSNKLGPG…DLPLPKKPTF (289 aa). ATP is bound by residues 495–503 and Lys-520; that span reads LGPGGFGSV. 2 positions are modified to phosphoserine: Ser-526 and Ser-541. The interval 581–598 is caM-binding; that stretch reads RKKLELDWPKRFEIIEGI. Catalysis depends on Asp-617, which acts as the Proton acceptor. Phosphoserine is present on residues Ser-621 and Ser-634. A Phosphothreonine modification is found at Thr-651. Residues Ser-694, Ser-695, and Ser-788 each carry the phosphoserine modification.

The protein belongs to the protein kinase superfamily. Ser/Thr protein kinase family.

It is found in the cell membrane. The catalysed reaction is L-seryl-[protein] + ATP = O-phospho-L-seryl-[protein] + ADP + H(+). The enzyme catalyses L-threonyl-[protein] + ATP = O-phospho-L-threonyl-[protein] + ADP + H(+). The protein is G-type lectin S-receptor-like serine/threonine-protein kinase At1g61430 of Arabidopsis thaliana (Mouse-ear cress).